Here is a 242-residue protein sequence, read N- to C-terminus: Pyridoxine 5'-phosphate synthase (242 aa).

Asparagine 9 serves as a coordination point for 3-amino-2-oxopropyl phosphate. Residue 11 to 12 (DH) participates in 1-deoxy-D-xylulose 5-phosphate binding. Arginine 20 serves as a coordination point for 3-amino-2-oxopropyl phosphate. The active-site Proton acceptor is histidine 45. Arginine 47 and histidine 52 together coordinate 1-deoxy-D-xylulose 5-phosphate. Glutamate 72 (proton acceptor) is an active-site residue. Residue threonine 102 coordinates 1-deoxy-D-xylulose 5-phosphate. The Proton donor role is filled by histidine 193. 3-amino-2-oxopropyl phosphate is bound by residues glycine 194 and 215 to 216 (GH).

It belongs to the PNP synthase family. As to quaternary structure, homooctamer; tetramer of dimers.

The protein resides in the cytoplasm. It catalyses the reaction 3-amino-2-oxopropyl phosphate + 1-deoxy-D-xylulose 5-phosphate = pyridoxine 5'-phosphate + phosphate + 2 H2O + H(+). It functions in the pathway cofactor biosynthesis; pyridoxine 5'-phosphate biosynthesis; pyridoxine 5'-phosphate from D-erythrose 4-phosphate: step 5/5. Its function is as follows. Catalyzes the complicated ring closure reaction between the two acyclic compounds 1-deoxy-D-xylulose-5-phosphate (DXP) and 3-amino-2-oxopropyl phosphate (1-amino-acetone-3-phosphate or AAP) to form pyridoxine 5'-phosphate (PNP) and inorganic phosphate. This chain is Pyridoxine 5'-phosphate synthase, found in Idiomarina loihiensis (strain ATCC BAA-735 / DSM 15497 / L2-TR).